The chain runs to 300 residues: Acetyl-coenzyme A carboxylase carboxyl transferase subunit beta (300 aa).

The CoA carboxyltransferase N-terminal domain occupies Leu-24–Ala-293. Residues Cys-28, Cys-31, Cys-47, and Cys-50 each coordinate Zn(2+). A C4-type zinc finger spans residues Cys-28–Cys-50.

The protein belongs to the AccD/PCCB family. In terms of assembly, acetyl-CoA carboxylase is a heterohexamer composed of biotin carboxyl carrier protein (AccB), biotin carboxylase (AccC) and two subunits each of ACCase subunit alpha (AccA) and ACCase subunit beta (AccD). It depends on Zn(2+) as a cofactor.

Its subcellular location is the cytoplasm. The catalysed reaction is N(6)-carboxybiotinyl-L-lysyl-[protein] + acetyl-CoA = N(6)-biotinyl-L-lysyl-[protein] + malonyl-CoA. Its pathway is lipid metabolism; malonyl-CoA biosynthesis; malonyl-CoA from acetyl-CoA: step 1/1. Functionally, component of the acetyl coenzyme A carboxylase (ACC) complex. Biotin carboxylase (BC) catalyzes the carboxylation of biotin on its carrier protein (BCCP) and then the CO(2) group is transferred by the transcarboxylase to acetyl-CoA to form malonyl-CoA. The polypeptide is Acetyl-coenzyme A carboxylase carboxyl transferase subunit beta (Gluconacetobacter diazotrophicus (strain ATCC 49037 / DSM 5601 / CCUG 37298 / CIP 103539 / LMG 7603 / PAl5)).